The primary structure comprises 141 residues: Large ribosomal subunit protein uL11 (141 aa).

It belongs to the universal ribosomal protein uL11 family. In terms of assembly, part of the ribosomal stalk of the 50S ribosomal subunit. Interacts with L10 and the large rRNA to form the base of the stalk. L10 forms an elongated spine to which L12 dimers bind in a sequential fashion forming a multimeric L10(L12)X complex. Post-translationally, one or more lysine residues are methylated.

In terms of biological role, forms part of the ribosomal stalk which helps the ribosome interact with GTP-bound translation factors. The polypeptide is Large ribosomal subunit protein uL11 (Amoebophilus asiaticus (strain 5a2)).